A 329-amino-acid chain; its full sequence is Sex comb on midleg-like protein 1 (329 aa).

Phosphoserine occurs at positions 138 and 238. The segment at 138–157 is disordered; the sequence is SPTLPVSRRENNSPSNLPRP. The SAM domain maps to 258–325; the sequence is WSVEAVVLFL…YYIDRLKQGK (68 aa).

This sequence belongs to the SCM family.

The protein resides in the nucleus. Its function is as follows. Putative Polycomb group (PcG) protein. PcG proteins act by forming multiprotein complexes, which are required to maintain the transcriptionally repressive state of homeotic genes throughout development. May be involved in spermatogenesis during sexual maturation. This Pan troglodytes (Chimpanzee) protein is Sex comb on midleg-like protein 1 (SCML1).